Here is a 100-residue protein sequence, read N- to C-terminus: uncharacterized protein (100 aa).

The helical transmembrane segment at 13 to 32 (IWSSLNIICLMVTFLNVQLS) threads the bilayer.

The protein resides in the mitochondrion membrane. This is an uncharacterized protein from Schizosaccharomyces pombe (strain 972 / ATCC 24843) (Fission yeast).